The sequence spans 481 residues: Probable glycine dehydrogenase (decarboxylating) subunit 2 (481 aa).

N6-(pyridoxal phosphate)lysine is present on K265.

The protein belongs to the GcvP family. C-terminal subunit subfamily. As to quaternary structure, the glycine cleavage system is composed of four proteins: P, T, L and H. In this organism, the P 'protein' is a heterodimer of two subunits. Pyridoxal 5'-phosphate serves as cofactor.

It carries out the reaction N(6)-[(R)-lipoyl]-L-lysyl-[glycine-cleavage complex H protein] + glycine + H(+) = N(6)-[(R)-S(8)-aminomethyldihydrolipoyl]-L-lysyl-[glycine-cleavage complex H protein] + CO2. In terms of biological role, the glycine cleavage system catalyzes the degradation of glycine. The P protein binds the alpha-amino group of glycine through its pyridoxal phosphate cofactor; CO(2) is released and the remaining methylamine moiety is then transferred to the lipoamide cofactor of the H protein. The sequence is that of Probable glycine dehydrogenase (decarboxylating) subunit 2 from Thermosipho melanesiensis (strain DSM 12029 / CIP 104789 / BI429).